The following is a 124-amino-acid chain: Modulator protein MzrA (124 aa).

Topologically, residues 1–7 (MINRRMK) are cytoplasmic. The chain crosses the membrane as a helical span at residues 8–28 (TGFVFHLLLLLLPLVVLVTSS). Residues 29–124 (RRTADDVTLH…KLSQQPFKLG (96 aa)) lie on the Periplasmic side of the membrane.

It belongs to the MzrA family. As to quaternary structure, interacts with EnvZ.

The protein localises to the cell inner membrane. Its function is as follows. Modulates the activity of the EnvZ/OmpR two-component regulatory system, probably by directly modulating EnvZ enzymatic activity and increasing stability of phosphorylated OmpR. In Musicola paradisiaca (strain Ech703) (Dickeya paradisiaca), this protein is Modulator protein MzrA.